A 278-amino-acid chain; its full sequence is Dermonecrotic toxin LlSicTox-alphaIII3ii (278 aa).

Residue histidine 5 is part of the active site. Mg(2+) contacts are provided by glutamate 25 and aspartate 27. Histidine 40 acts as the Nucleophile in catalysis. Cysteine 44 and cysteine 50 form a disulfide bridge. Aspartate 84 lines the Mg(2+) pocket.

Belongs to the arthropod phospholipase D family. Class I subfamily. Mg(2+) serves as cofactor. Expressed by the venom gland.

The protein localises to the secreted. It catalyses the reaction an N-(acyl)-sphingosylphosphocholine = an N-(acyl)-sphingosyl-1,3-cyclic phosphate + choline. The enzyme catalyses an N-(acyl)-sphingosylphosphoethanolamine = an N-(acyl)-sphingosyl-1,3-cyclic phosphate + ethanolamine. It carries out the reaction a 1-acyl-sn-glycero-3-phosphocholine = a 1-acyl-sn-glycero-2,3-cyclic phosphate + choline. The catalysed reaction is a 1-acyl-sn-glycero-3-phosphoethanolamine = a 1-acyl-sn-glycero-2,3-cyclic phosphate + ethanolamine. In terms of biological role, dermonecrotic toxins cleave the phosphodiester linkage between the phosphate and headgroup of certain phospholipids (sphingolipid and lysolipid substrates), forming an alcohol (often choline) and a cyclic phosphate. This toxin acts on sphingomyelin (SM). It may also act on ceramide phosphoethanolamine (CPE), lysophosphatidylcholine (LPC) and lysophosphatidylethanolamine (LPE), but not on lysophosphatidylserine (LPS), and lysophosphatidylglycerol (LPG). It acts by transphosphatidylation, releasing exclusively cyclic phosphate products as second products. Induces dermonecrosis, hemolysis, increased vascular permeability, edema, inflammatory response, and platelet aggregation. This chain is Dermonecrotic toxin LlSicTox-alphaIII3ii, found in Loxosceles laeta (South American recluse spider).